Consider the following 107-residue polypeptide: Iron-binding protein IscA (107 aa).

Residues Cys-35, Cys-99, and Cys-101 each coordinate Fe cation.

The protein belongs to the HesB/IscA family. As to quaternary structure, homodimer; may form tetramers and higher multimers. It depends on Fe cation as a cofactor.

Is able to transfer iron-sulfur clusters to apo-ferredoxin. Multiple cycles of [2Fe2S] cluster formation and transfer are observed, suggesting that IscA acts catalytically. Recruits intracellular free iron so as to provide iron for the assembly of transient iron-sulfur cluster in IscU in the presence of IscS, L-cysteine and the thioredoxin reductase system TrxA/TrxB. This Pectobacterium atrosepticum (strain SCRI 1043 / ATCC BAA-672) (Erwinia carotovora subsp. atroseptica) protein is Iron-binding protein IscA.